The primary structure comprises 424 residues: Calreticulin-3 (424 aa).

The first 28 residues, 1–28 (MGLPQNKLSFFCFFFLVSVLTLAPLAFS), serve as a signal peptide directing secretion. An N-linked (GlcNAc...) asparagine glycan is attached at asparagine 97. An intrachain disulfide couples cysteine 114 to cysteine 146. Residues tyrosine 118, lysine 120, tyrosine 137, and aspartate 144 each contribute to the an alpha-D-glucoside site. 7 consecutive repeat copies span residues 200–211 (REFGSMYTDWDI), 219–230 (VKNAKKPEDWDD), 236–247 (DPNDVKPEGFDS), 254–265 (DRKAKEPEDWDE), 269–279 (GLWEPPKIPNS), 283–293 (GPWKAKRIKNP), and 297–307 (GKWKNPWIDNP). The 4 X approximate repeats stretch occupies residues 200–265 (REFGSMYTDW…KAKEPEDWDE (66 aa)). The span at 228–237 (WDDREYIDDP) shows a compositional bias: acidic residues. The disordered stretch occupies residues 228 to 275 (WDDREYIDDPNDVKPEGFDSIPREIPDRKAKEPEDWDEEENGLWEPPK). Residues 238–260 (NDVKPEGFDSIPREIPDRKAKEP) are compositionally biased toward basic and acidic residues. A 3 X approximate repeats region spans residues 269–307 (GLWEPPKIPNSAYKGPWKAKRIKNPNYKGKWKNPWIDNP). Glutamate 327 is a binding site for an alpha-D-glucoside. Residues 368–401 (FAEAEKERKAREDEEARIAREEGERRRKERDHRY) show a composition bias toward basic and acidic residues. The disordered stretch occupies residues 368 to 424 (FAEAEKERKAREDEEARIAREEGERRRKERDHRYGDRRRRYKRPNPRDYMDDYHDEL). Residues 402 to 411 (GDRRRRYKRP) are compositionally biased toward basic residues. The segment covering 412–424 (NPRDYMDDYHDEL) has biased composition (basic and acidic residues). Residues 421–424 (HDEL) carry the Prevents secretion from ER motif.

It belongs to the calreticulin family.

It localises to the endoplasmic reticulum lumen. Functionally, molecular calcium-binding chaperone promoting folding, oligomeric assembly and quality control in the ER via the calreticulin/calnexin cycle. This lectin may interact transiently with almost all of the monoglucosylated glycoproteins that are synthesized in the ER. Required for elongation factor Tu receptor (EFR) accumulation and for EFR, but not flagellin-sensing 2 (FLS2) signaling. The protein is Calreticulin-3 (CRT3) of Arabidopsis thaliana (Mouse-ear cress).